The chain runs to 100 residues: Urease subunit gamma (100 aa).

This sequence belongs to the urease gamma subunit family. As to quaternary structure, heterotrimer of UreA (gamma), UreB (beta) and UreC (alpha) subunits. Three heterotrimers associate to form the active enzyme.

Its subcellular location is the cytoplasm. It carries out the reaction urea + 2 H2O + H(+) = hydrogencarbonate + 2 NH4(+). Its pathway is nitrogen metabolism; urea degradation; CO(2) and NH(3) from urea (urease route): step 1/1. The protein is Urease subunit gamma of Klebsiella pneumoniae.